The sequence spans 531 residues: Probable protein phosphatase 2C 66 (531 aa).

The tract at residues 1-47 (MGSCLSSDLPPRAGAGAGASPGWPQRWRRRRQRGVERGGAVSGGGGG) is disordered. A compositionally biased stretch (low complexity) spans 10–25 (PPRAGAGAGASPGWPQ). The PPM-type phosphatase domain maps to 88–401 (AACLHTQQGR…DDCAVVCLFL (314 aa)). Mn(2+) is bound by residues D123 and G124. Positions 151 to 172 (SANEDTSSHQNGSISGSVNSEE) are enriched in polar residues. The interval 151–176 (SANEDTSSHQNGSISGSVNSEESPVV) is disordered. Mn(2+) contacts are provided by D346 and D392.

This sequence belongs to the PP2C family. Mg(2+) serves as cofactor. It depends on Mn(2+) as a cofactor.

It carries out the reaction O-phospho-L-seryl-[protein] + H2O = L-seryl-[protein] + phosphate. The enzyme catalyses O-phospho-L-threonyl-[protein] + H2O = L-threonyl-[protein] + phosphate. In Oryza sativa subsp. japonica (Rice), this protein is Probable protein phosphatase 2C 66.